A 384-amino-acid chain; its full sequence is 4-hydroxy-3-methylbut-2-en-1-yl diphosphate synthase (flavodoxin) (384 aa).

[4Fe-4S] cluster-binding residues include Cys-272, Cys-275, Cys-307, and Glu-314.

It belongs to the IspG family. [4Fe-4S] cluster serves as cofactor.

It catalyses the reaction (2E)-4-hydroxy-3-methylbut-2-enyl diphosphate + oxidized [flavodoxin] + H2O + 2 H(+) = 2-C-methyl-D-erythritol 2,4-cyclic diphosphate + reduced [flavodoxin]. The protein operates within isoprenoid biosynthesis; isopentenyl diphosphate biosynthesis via DXP pathway; isopentenyl diphosphate from 1-deoxy-D-xylulose 5-phosphate: step 5/6. Its function is as follows. Converts 2C-methyl-D-erythritol 2,4-cyclodiphosphate (ME-2,4cPP) into 1-hydroxy-2-methyl-2-(E)-butenyl 4-diphosphate. The polypeptide is 4-hydroxy-3-methylbut-2-en-1-yl diphosphate synthase (flavodoxin) (Rhodospirillum rubrum (strain ATCC 11170 / ATH 1.1.1 / DSM 467 / LMG 4362 / NCIMB 8255 / S1)).